The primary structure comprises 590 residues: (+)-sabinene synthase, chloroplastic (590 aa).

A chloroplast-targeting transit peptide spans 1–51 (MSSISINIAMPLNSLHNFERKPSKAWSTSCTAPAARLRASSSLQQEKPHQI). Residues Asp-343, Asp-347, Asp-487, Thr-491, and Glu-495 each coordinate Mg(2+). The short motif at 343–347 (DDVYD) is the DDXXD motif element.

It belongs to the terpene synthase family. As to quaternary structure, monomer. The cofactor is Mg(2+).

Its subcellular location is the plastid. The protein resides in the chloroplast. The enzyme catalyses (2E)-geranyl diphosphate = (1R,5R)-sabinene + diphosphate. The protein operates within terpene metabolism; sabinene hydrate biosynthesis. Functionally, catalyzes the formation of the (-)-3-isothujone precursor sabinene from geranyl diphosphate. The enzyme also produces significant amounts of gamma-terpinene, terpinolene and limonene. This chain is (+)-sabinene synthase, chloroplastic, found in Salvia officinalis (Sage).